A 162-amino-acid chain; its full sequence is NADH-quinone oxidoreductase subunit I (162 aa).

4Fe-4S ferredoxin-type domains lie at 54–83 (RRYENGEERCIACKLCEAVCPALAITIESE) and 93–122 (TRYDIDLTKCIFCGFCEESCPVDSIVETQI). [4Fe-4S] cluster contacts are provided by Cys63, Cys66, Cys69, Cys73, Cys102, Cys105, Cys108, and Cys112.

Belongs to the complex I 23 kDa subunit family. In terms of assembly, NDH-1 is composed of 14 different subunits. Subunits NuoA, H, J, K, L, M, N constitute the membrane sector of the complex. [4Fe-4S] cluster is required as a cofactor.

The protein resides in the cell inner membrane. It catalyses the reaction a quinone + NADH + 5 H(+)(in) = a quinol + NAD(+) + 4 H(+)(out). Functionally, NDH-1 shuttles electrons from NADH, via FMN and iron-sulfur (Fe-S) centers, to quinones in the respiratory chain. The immediate electron acceptor for the enzyme in this species is believed to be ubiquinone. Couples the redox reaction to proton translocation (for every two electrons transferred, four hydrogen ions are translocated across the cytoplasmic membrane), and thus conserves the redox energy in a proton gradient. The sequence is that of NADH-quinone oxidoreductase subunit I from Burkholderia ambifaria (strain MC40-6).